Here is a 166-residue protein sequence, read N- to C-terminus: Large ribosomal subunit protein uL10 (166 aa).

It belongs to the universal ribosomal protein uL10 family. Part of the ribosomal stalk of the 50S ribosomal subunit. The N-terminus interacts with L11 and the large rRNA to form the base of the stalk. The C-terminus forms an elongated spine to which L12 dimers bind in a sequential fashion forming a multimeric L10(L12)X complex.

In terms of biological role, forms part of the ribosomal stalk, playing a central role in the interaction of the ribosome with GTP-bound translation factors. This Streptococcus pyogenes serotype M1 protein is Large ribosomal subunit protein uL10 (rplJ).